The following is a 387-amino-acid chain: tRNA N6-adenosine threonylcarbamoyltransferase (387 aa).

Histidine 112 and histidine 116 together coordinate Fe cation. Residues 134 to 138, aspartate 167, glycine 180, and asparagine 325 contribute to the substrate site; that span reads LASGG. Fe cation is bound at residue aspartate 353.

It belongs to the KAE1 / TsaD family. It depends on Fe(2+) as a cofactor.

The protein resides in the cytoplasm. It carries out the reaction L-threonylcarbamoyladenylate + adenosine(37) in tRNA = N(6)-L-threonylcarbamoyladenosine(37) in tRNA + AMP + H(+). Functionally, required for the formation of a threonylcarbamoyl group on adenosine at position 37 (t(6)A37) in tRNAs that read codons beginning with adenine. Is involved in the transfer of the threonylcarbamoyl moiety of threonylcarbamoyl-AMP (TC-AMP) to the N6 group of A37, together with TsaE and TsaB. TsaD likely plays a direct catalytic role in this reaction. The chain is tRNA N6-adenosine threonylcarbamoyltransferase from Rickettsia typhi (strain ATCC VR-144 / Wilmington).